The chain runs to 162 residues: tRNA (cytidine(34)-2'-O)-methyltransferase (162 aa).

The S-adenosyl-L-methionine site is built by L83, G105, I127, and S135.

Belongs to the class IV-like SAM-binding methyltransferase superfamily. RNA methyltransferase TrmH family. TrmL subfamily. As to quaternary structure, homodimer.

It is found in the cytoplasm. The catalysed reaction is cytidine(34) in tRNA + S-adenosyl-L-methionine = 2'-O-methylcytidine(34) in tRNA + S-adenosyl-L-homocysteine + H(+). It catalyses the reaction 5-carboxymethylaminomethyluridine(34) in tRNA(Leu) + S-adenosyl-L-methionine = 5-carboxymethylaminomethyl-2'-O-methyluridine(34) in tRNA(Leu) + S-adenosyl-L-homocysteine + H(+). In terms of biological role, methylates the ribose at the nucleotide 34 wobble position in the two leucyl isoacceptors tRNA(Leu)(CmAA) and tRNA(Leu)(cmnm5UmAA). Catalyzes the methyl transfer from S-adenosyl-L-methionine to the 2'-OH of the wobble nucleotide. The sequence is that of tRNA (cytidine(34)-2'-O)-methyltransferase from Photorhabdus asymbiotica subsp. asymbiotica (strain ATCC 43949 / 3105-77) (Xenorhabdus luminescens (strain 2)).